The following is a 511-amino-acid chain: Phenylalanine--tRNA ligase alpha subunit (511 aa).

L-phenylalanine-binding positions include Thr-352, 390–392 (QVE), Tyr-429, and Phe-455.

This sequence belongs to the class-II aminoacyl-tRNA synthetase family. Phe-tRNA synthetase alpha subunit type 2 subfamily. In terms of assembly, tetramer of two alpha and two beta subunits. Requires Mg(2+) as cofactor.

Its subcellular location is the cytoplasm. The enzyme catalyses tRNA(Phe) + L-phenylalanine + ATP = L-phenylalanyl-tRNA(Phe) + AMP + diphosphate + H(+). This is Phenylalanine--tRNA ligase alpha subunit from Methanothermobacter thermautotrophicus (strain ATCC 29096 / DSM 1053 / JCM 10044 / NBRC 100330 / Delta H) (Methanobacterium thermoautotrophicum).